Consider the following 561-residue polypeptide: uncharacterized protein (561 aa).

Residues 187-217 (DDEELSEEEILNRIDKLQIELEQVIGKQKNI) are a coiled coil.

This is an uncharacterized protein from Dictyostelium discoideum (Social amoeba).